Reading from the N-terminus, the 62-residue chain is MGIDKRAEATAKDVQGKAQEAWGDLTDDPKLELEGKAKQVEASAEHKKEDLKDQAHRTIDNV.

2 stretches are compositionally biased toward basic and acidic residues: residues 1 to 15 and 27 to 62; these read MGID…KDVQ and DDPK…IDNV. Residues 1–62 form a disordered region; the sequence is MGIDKRAEAT…DQAHRTIDNV (62 aa).

This sequence belongs to the UPF0337 (CsbD) family.

This chain is UPF0337 protein gsr0040, found in Gloeobacter violaceus (strain ATCC 29082 / PCC 7421).